The primary structure comprises 491 residues: Cytochrome P450 monooxygenase olcB (491 aa).

A helical membrane pass occupies residues 5 to 27 (LLLSLSVCLLYVFITAFWNLYIH). Residue Cys-435 coordinates heme.

The protein belongs to the cytochrome P450 family. Requires heme as cofactor.

The protein localises to the membrane. The protein operates within secondary metabolite biosynthesis; terpenoid biosynthesis. Functionally, cytochrome P450 monooxygenase; part of the gene cluster that mediates the biosynthesis of 15-deoxyoxalicine B. The first step of the pathway is the synthesis of nicotinyl-CoA from nicotinic acid by the nicotinic acid-CoA ligase olcI. Nicotinyl-CoA is then a substrate of polyketide synthase olcA to produce 4-hydroxy-6-(3-pyridinyl)-2H-pyran-2-one (HPPO) which is further prenylated by the polyprenyl transferase olcH to yield geranylgeranyl-HPPO. Geranylgeranyl pyrophosphate is provided by the cluster-specific geranylgeranyl pyrophosphate synthase olcC. The FAD-dependent monooxygenase olcE catalyzes the epoxidation of geranylgeranyl-HPPO and the terpene cyclase olcD catalyzes the cyclization of the terpenoid component, resulting in the formation of the tricyclic terpene moiety seen in predecaturin E. The cytochrome P450 monooxygenase then catalyzes the allylic oxidation of predecaturin E, which is followed by spirocylization with concomitant loss of one molecule of water to form decaturin E. Decaturin E is the substrate of the cytochrome P450 monooxygenase olcJ which hydroxylates it at the C-29 position to form decaturin F. The short-chain dehydrogenase/reductase olcF may catalyze the oxidation of decaturin F to generate the 29-hydroxyl-27-one intermediate, and subsequent hemiacetal formation probably leads to the formation of decaturin C. The dioxygenase olcK may be a peroxisomal enzyme that catalyzes the hydroxylation of decaturin C into decaturin A once decaturin C is shuttled into the peroxisome by the MFS transporter olcL. Finally the cytochrome P450 monooxygenase olcB catalyzes the oxidative rearrangement to yield 15-deoxyoxalicine B. In the absence of olcJ, decaturin E may be shunted to a pathway in which it is oxidized to a ketone, possibly by olcF, to form decaturin D, which undergoes further allylic oxidation to yield decaturin G. Moreover, in the absence of oclK or oclL, oclB can convert decaturin C into 15-deoxyoxalicine A. The sequence is that of Cytochrome P450 monooxygenase olcB from Penicillium canescens.